The primary structure comprises 84 residues: Gomesin (84 aa).

The signal sequence occupies residues 1-23 (MNRTRLFACLLLAVLILVHESNA). The residue at position 24 (Q24) is a Pyrrolidone carboxylic acid. 2 cysteine pairs are disulfide-bonded: C25/C38 and C29/C34. An Arginine amide modification is found at R41. A propeptide spanning residues 42 to 84 (GKRSLDETNVGTSDVEKRAFDDSNVPSLVEERELEDEGSFIFD) is cleaved from the precursor.

In terms of tissue distribution, in hemocytes only, but not in all hemocytes observed.

The protein resides in the secreted. In terms of biological role, active against several Gram-positive bacteria such as Bacillus spp, Staphylococcus spp and E.faecalis, several Gram-negative bacteria such as E.coli, K.pneumoniae, P.aeruginosa and Salmonella spp, filamentous fungi such as N.crassa, T.viridae and yeasts such as C.albicans. It is active against the parasite L.amazonensis as well. It shows hemolytic activity. This is Gomesin from Acanthoscurria gomesiana (Tarantula spider).